The sequence spans 307 residues: MIYTLTLNPSVDYKIVLKEFQEESLNYALNNNFFAGGKGINVSTVLKNLGKPSTALGFLGGFTGDYIRFSLDSRGIKNDFIKIKYDTRLNIKMIANGRETEINANSPDISENEFELLKNKLKNLANNSTLVMSGSVPAALGEDAYNEIANSISNDVKLIIDTSGKPLRKILRLNPFLIKPNIYELEDLFNAKFDSTKELIKIGKNLVESGVQNIIISMGSDGAIFIGGKNVAFRAFVPKINFVSTIGAGDSVIAGFVYAFDNGSTLEDSFKFGVAAGTATALKGNLCEFQDVKKMLCQIRVEDIYTS.

ATP-binding positions include 217 to 222 (SMGSDG) and 249 to 250 (GD). Catalysis depends on D250, which acts as the Proton acceptor.

This sequence belongs to the carbohydrate kinase PfkB family.

The catalysed reaction is beta-D-fructose 1-phosphate + ATP = beta-D-fructose 1,6-bisphosphate + ADP + H(+). Functionally, catalyzes the ATP-dependent phosphorylation of fructose-l-phosphate to fructose-l,6-bisphosphate. This Borreliella burgdorferi (strain ATCC 35210 / DSM 4680 / CIP 102532 / B31) (Borrelia burgdorferi) protein is 1-phosphofructokinase (fruK).